The following is an 884-amino-acid chain: Probable mixed-linked glucan synthase 9 (884 aa).

Over residues 1 to 27 (MALSPAAAGRTGRNNNNDAGLADPLLP) the composition is skewed to low complexity. Residues 1-34 (MALSPAAAGRTGRNNNNDAGLADPLLPAGGGGGG) form a disordered region. The next 2 membrane-spanning stretches (helical) occupy residues 73-93 (VLLHPYRLLTLVRLIAVVLFL) and 104-124 (AMWLWWISIAGDFWFGVTWLL). Asp-195 is an active-site residue. Substrate is bound by residues Asp-396 and Asp-398. Asp-565 is a catalytic residue. Helical transmembrane passes span 640–660 (TAYPVSALFMVVYDLLPVIWL), 672–692 (FSTYVAYLVAVIAMIEVIGLV), 708–728 (EQFYMIGATGVYLAAVLHIVL), 765–785 (LLAPTVVVMAVNVTAIGAAAG), 802–822 (AGLVFNVWVLVLLYPFALGIM), and 830–850 (CALFALLVAACAAVAAGFVAV).

It belongs to the glycosyltransferase 2 family. Plant cellulose synthase-like F subfamily.

The protein resides in the golgi apparatus membrane. May catalyze both beta-1,3 and beta-1,4 glycosidic linkage on beta-D-glucan. Essential for (1,3;1,4)-beta-D-glucans synthesis in grasses and cereals (Poaceae). The mixed-linked glucans (which are not present in walls of dicotyledons or most other monocotyledonous plants) are particularly important constituents of the walls of the starchy endosperm and aleurone cells of cereal grains such as oats, wheat, rice and barley. They can account for up to 70% by weight of the wall. This chain is Probable mixed-linked glucan synthase 9 (CSLF9), found in Oryza sativa subsp. japonica (Rice).